Reading from the N-terminus, the 656-residue chain is Chaperone protein DnaK (656 aa).

Position 204 is a phosphothreonine; by autocatalysis (Thr204). The tract at residues 602-656 is disordered; the sequence is KLAERVYAKKGGAAGAPPGGEAEGEPQAQAGGKKEDVVDAEFEEVKDEKKKDEDK. The span at 620–632 shows a compositional bias: low complexity; the sequence is GGEAEGEPQAQAG. The span at 647-656 shows a compositional bias: basic and acidic residues; sequence KDEKKKDEDK.

The protein belongs to the heat shock protein 70 family.

Functionally, acts as a chaperone. In Coxiella burnetii (strain CbuG_Q212) (Coxiella burnetii (strain Q212)), this protein is Chaperone protein DnaK.